The sequence spans 273 residues: Shikimate dehydrogenase (NADP(+)) (273 aa).

Residues 15 to 17 and Thr-62 contribute to the shikimate site; that span reads SQS. Lys-66 serves as the catalytic Proton acceptor. NADP(+) is bound at residue Glu-78. Residues Asn-87 and Asp-102 each coordinate shikimate. Residues 127–131, 151–156, and Met-215 each bind NADP(+); these read GAGGA and NRTVTK. Shikimate is bound at residue Tyr-217. Residue Gly-239 participates in NADP(+) binding.

It belongs to the shikimate dehydrogenase family. Homodimer.

The catalysed reaction is shikimate + NADP(+) = 3-dehydroshikimate + NADPH + H(+). It functions in the pathway metabolic intermediate biosynthesis; chorismate biosynthesis; chorismate from D-erythrose 4-phosphate and phosphoenolpyruvate: step 4/7. Involved in the biosynthesis of the chorismate, which leads to the biosynthesis of aromatic amino acids. Catalyzes the reversible NADPH linked reduction of 3-dehydroshikimate (DHSA) to yield shikimate (SA). The sequence is that of Shikimate dehydrogenase (NADP(+)) from Laribacter hongkongensis (strain HLHK9).